A 431-amino-acid polypeptide reads, in one-letter code: MSLKKALDDCMIDFDRCVLVTDLLEEYKLSYKEVNDVLEAYIKEQEPATKFEKRFLVHGKRKTQGSDSGEDLYSVVLESRMQDWLAKVQDAESQLYSVKIAGGTKAPAAIFKPMQHLEVKLAKVEQRPGAGKIVPSANGTTPHNGVKSEPTKSEPSKSAVKLEPSKSSLKSEPAKSKAEKPVASKSSPEDKKTSPKEQASKAKPAAAKKGSINSFFTAAASKPKDVKATPSKSTSGTVDNFFKKQPAGAKKSPPESEDKSKKDASNSNKKEASKKKSPSPTKKPTTANTSMQLFDEESAESSDEEEKLDMLRRKVIESDNDSDQEKASSSKRRRISDSEDEEQPPKKSADEETIALDEKMDTEPANETYLDEDGFVITQRKPTKAQPANKKVSPKAAAPVNKKKSPPSAAKAGKDAPKTKQAGIMNFFSKK.

A necessary for function, possibly resulting from its inability to interact with PolD2 region spans residues 64 to 80 (QGSDSGEDLYSVVLESR). The disordered stretch occupies residues 128–431 (PGAGKIVPSA…AGIMNFFSKK (304 aa)). Low complexity predominate over residues 156–171 (SKSAVKLEPSKSSLKS). 2 stretches are compositionally biased toward basic and acidic residues: residues 172-200 (EPAKSKAEKPVASKSSPEDKKTSPKEQAS) and 252-271 (SPPESEDKSKKDASNSNKKE). Over residues 278 to 290 (PSPTKKPTTANTS) the composition is skewed to low complexity. A compositionally biased stretch (acidic residues) spans 294–307 (FDEESAESSDEEEK). Basic and acidic residues-rich tracts occupy residues 308–328 (LDMLRRKVIESDNDSDQEKAS) and 343–362 (QPPKKSADEETIALDEKMDT). The segment covering 387–411 (PANKKVSPKAAAPVNKKKSPPSAAK) has biased composition (low complexity).

Component of both the DNA polymerase delta and DNA polymerase zeta complexes. The DNA polymerase delta complex consists of three subunits: the catalytic subunit PolD1 and two accessory subunits PolD2/Pol31 and PolD3/Pol32. Within the delta complex, interacts with both PolD1 and PolD2. Component of the DNA polymerase zeta complex consisting of four subunits: the catalytic subunit PolZ1 and three accessory subunits PolZ2/Rev7, PolD2/Pol31 and PolD3/Pol32. As to expression, expressed in ovaries (at the protein level). Expressed in ovaries.

The protein resides in the nucleus. It is found in the nucleoplasm. Its function is as follows. Accessory component of the DNA polymerase delta complex and possibly the DNA polymerase zeta complex. As a component of the delta complex, participates in high fidelity genome replication, including lagging strand synthesis, DNA recombination and repair. Required to recruit the DNA polymerase delta complex to the nucleus of rapidly dividing embryonic cells, and as a consequence is essential for genome replication during the earliest cell cycles. Increases the efficiency and processivity of DNA synthesis of the DNA polymerases during mitotic DNA replication and repair. During development this function is essential for preventing replication stress that results in the formation of chromosomal fragile sites (CFS) such as chromosomal breaks. Ensures genomic stability by promoting several types of DNA repair mechanisms including repairing broken dicentric chromosomes through homolog-dependent break-induced replication (BIR). During homologous recombination (HR) repair, required for maintaining the processivity of the delta complex during break-induced replication; a form of HR that requires extensive DNA synthesis such as the repair of large gaps. Able to suppress position effect variegation and may therefore have a role in the induction of chromatin state changes that likely include its activities in DNA replication and repair. The protein is DNA polymerase delta subunit 3 of Drosophila melanogaster (Fruit fly).